A 161-amino-acid polypeptide reads, in one-letter code: NAD(P)H-quinone oxidoreductase subunit I, chloroplastic (161 aa).

2 consecutive 4Fe-4S ferredoxin-type domains span residues 55 to 84 (GRIH…VDWK) and 95 to 124 (LNYS…MTEE). Residues C64, C67, C70, C74, C104, C107, C110, and C114 each coordinate [4Fe-4S] cluster.

The protein belongs to the complex I 23 kDa subunit family. In terms of assembly, NDH is composed of at least 16 different subunits, 5 of which are encoded in the nucleus. [4Fe-4S] cluster serves as cofactor.

The protein resides in the plastid. It localises to the chloroplast thylakoid membrane. It carries out the reaction a plastoquinone + NADH + (n+1) H(+)(in) = a plastoquinol + NAD(+) + n H(+)(out). The catalysed reaction is a plastoquinone + NADPH + (n+1) H(+)(in) = a plastoquinol + NADP(+) + n H(+)(out). Its function is as follows. NDH shuttles electrons from NAD(P)H:plastoquinone, via FMN and iron-sulfur (Fe-S) centers, to quinones in the photosynthetic chain and possibly in a chloroplast respiratory chain. The immediate electron acceptor for the enzyme in this species is believed to be plastoquinone. Couples the redox reaction to proton translocation, and thus conserves the redox energy in a proton gradient. The chain is NAD(P)H-quinone oxidoreductase subunit I, chloroplastic from Lotus japonicus (Lotus corniculatus var. japonicus).